The sequence spans 167 residues: Phosphopantetheine adenylyltransferase (167 aa).

Position 13 (threonine 13) interacts with substrate. Residues 13–14 (TF) and histidine 21 each bind ATP. The substrate site is built by lysine 45, leucine 78, and arginine 92. ATP contacts are provided by residues 93–95 (GLR), glutamate 103, and 128–134 (TQFISSS).

Belongs to the bacterial CoaD family. In terms of assembly, homohexamer. Requires Mg(2+) as cofactor.

It is found in the cytoplasm. The enzyme catalyses (R)-4'-phosphopantetheine + ATP + H(+) = 3'-dephospho-CoA + diphosphate. It participates in cofactor biosynthesis; coenzyme A biosynthesis; CoA from (R)-pantothenate: step 4/5. Functionally, reversibly transfers an adenylyl group from ATP to 4'-phosphopantetheine, yielding dephospho-CoA (dPCoA) and pyrophosphate. This Wolbachia sp. subsp. Brugia malayi (strain TRS) protein is Phosphopantetheine adenylyltransferase.